A 439-amino-acid chain; its full sequence is Probable non-inhibitory serpin-Z9 (439 aa).

A disordered region spans residues 12 to 44; sequence RRPPFPAGDANHRRLSSAPAPKPEAPAEAMPPP. A compositionally biased stretch (pro residues) spans 31-44; sequence APKPEAPAEAMPPP. An RCL region spans residues 389-413; it reads GIEETSVSMGLGKPLPAQHFKADHP.

It belongs to the serpin family.

The chain is Probable non-inhibitory serpin-Z9 from Oryza sativa subsp. japonica (Rice).